We begin with the raw amino-acid sequence, 211 residues long: Large ribosomal subunit protein uL4 (211 aa).

The disordered stretch occupies residues 40-80 (QQAHSRQGTASTLTRSEVRGGGRKPYKQKGTGRARQGSIRT). Polar residues predominate over residues 41–54 (QAHSRQGTASTLTR). Over residues 60 to 71 (GGRKPYKQKGTG) the composition is skewed to basic residues.

Belongs to the universal ribosomal protein uL4 family. As to quaternary structure, part of the 50S ribosomal subunit.

In terms of biological role, one of the primary rRNA binding proteins, this protein initially binds near the 5'-end of the 23S rRNA. It is important during the early stages of 50S assembly. It makes multiple contacts with different domains of the 23S rRNA in the assembled 50S subunit and ribosome. Functionally, forms part of the polypeptide exit tunnel. The sequence is that of Large ribosomal subunit protein uL4 from Prochlorococcus marinus (strain MIT 9211).